A 207-amino-acid polypeptide reads, in one-letter code: Thiamine-phosphate synthase (207 aa).

Residues 37–41 (QYRDK) and N69 each bind 4-amino-2-methyl-5-(diphosphooxymethyl)pyrimidine. 2 residues coordinate Mg(2+): D70 and D89. 4-amino-2-methyl-5-(diphosphooxymethyl)pyrimidine is bound at residue S108. 135–137 (SRT) serves as a coordination point for 2-[(2R,5Z)-2-carboxy-4-methylthiazol-5(2H)-ylidene]ethyl phosphate. K138 lines the 4-amino-2-methyl-5-(diphosphooxymethyl)pyrimidine pocket. G164 contacts 2-[(2R,5Z)-2-carboxy-4-methylthiazol-5(2H)-ylidene]ethyl phosphate.

Belongs to the thiamine-phosphate synthase family. Requires Mg(2+) as cofactor.

The catalysed reaction is 2-[(2R,5Z)-2-carboxy-4-methylthiazol-5(2H)-ylidene]ethyl phosphate + 4-amino-2-methyl-5-(diphosphooxymethyl)pyrimidine + 2 H(+) = thiamine phosphate + CO2 + diphosphate. The enzyme catalyses 2-(2-carboxy-4-methylthiazol-5-yl)ethyl phosphate + 4-amino-2-methyl-5-(diphosphooxymethyl)pyrimidine + 2 H(+) = thiamine phosphate + CO2 + diphosphate. It catalyses the reaction 4-methyl-5-(2-phosphooxyethyl)-thiazole + 4-amino-2-methyl-5-(diphosphooxymethyl)pyrimidine + H(+) = thiamine phosphate + diphosphate. Its pathway is cofactor biosynthesis; thiamine diphosphate biosynthesis; thiamine phosphate from 4-amino-2-methyl-5-diphosphomethylpyrimidine and 4-methyl-5-(2-phosphoethyl)-thiazole: step 1/1. Functionally, condenses 4-methyl-5-(beta-hydroxyethyl)thiazole monophosphate (THZ-P) and 2-methyl-4-amino-5-hydroxymethyl pyrimidine pyrophosphate (HMP-PP) to form thiamine monophosphate (TMP). The chain is Thiamine-phosphate synthase from Chromobacterium violaceum (strain ATCC 12472 / DSM 30191 / JCM 1249 / CCUG 213 / NBRC 12614 / NCIMB 9131 / NCTC 9757 / MK).